A 360-amino-acid chain; its full sequence is Putative mRNA-decapping protein (360 aa).

The CCHC-type zinc-finger motif lies at 11 to 28; sequence HICSNCGRSGHEFRNCIE. Residues 163 to 347 enclose the Nudix hydrolase domain; that stretch reads YKYDNILYHF…KKRILTRVYL (185 aa). A Nudix box motif is present at residues 242-264; sequence GRRDKRSEENMVCACREFEEETG. Glutamate 249 contacts Mg(2+). Glutamate 258 acts as the Nucleophile in catalysis. Glutamate 262 serves as a coordination point for Mg(2+).

The protein belongs to the Nudix hydrolase family. DIPP subfamily. Mg(2+) serves as cofactor. The cofactor is Mn(2+).

It catalyses the reaction diphospho-myo-inositol polyphosphate + H2O = myo-inositol polyphosphate + phosphate.. Might function as a decapping enzyme required for the removal of the 5'-end m7GpppN cap tethered to viral and host mRNAs to allow their decay in cells. In addition to the mRNA cap, probably also efficiently hydrolyzes diphosphoinositol polyphosphates. This is Putative mRNA-decapping protein from Acanthamoeba polyphaga (Amoeba).